A 425-amino-acid polypeptide reads, in one-letter code: Serine--tRNA ligase (425 aa).

231 to 233 contacts L-serine; the sequence is TAE. 262–264 is a binding site for ATP; that stretch reads RSE. Residue Glu285 coordinates L-serine. ATP is bound at residue 349-352; sequence EISS. Residue Ser385 coordinates L-serine.

It belongs to the class-II aminoacyl-tRNA synthetase family. Type-1 seryl-tRNA synthetase subfamily. In terms of assembly, homodimer. The tRNA molecule binds across the dimer.

The protein localises to the cytoplasm. It catalyses the reaction tRNA(Ser) + L-serine + ATP = L-seryl-tRNA(Ser) + AMP + diphosphate + H(+). The enzyme catalyses tRNA(Sec) + L-serine + ATP = L-seryl-tRNA(Sec) + AMP + diphosphate + H(+). The protein operates within aminoacyl-tRNA biosynthesis; selenocysteinyl-tRNA(Sec) biosynthesis; L-seryl-tRNA(Sec) from L-serine and tRNA(Sec): step 1/1. In terms of biological role, catalyzes the attachment of serine to tRNA(Ser). Is also able to aminoacylate tRNA(Sec) with serine, to form the misacylated tRNA L-seryl-tRNA(Sec), which will be further converted into selenocysteinyl-tRNA(Sec). The chain is Serine--tRNA ligase from Alkaliphilus oremlandii (strain OhILAs) (Clostridium oremlandii (strain OhILAs)).